Reading from the N-terminus, the 130-residue chain is Calcitonin gene-related peptide 2 (130 aa).

Residues 1–26 (MDFWKFFPFLALSTIWVLCLASSLQA) form the signal peptide. Positions 27–82 (APFRSALESSLDLGTLGDQEKHLLLAALMQDYEQMKARKLEQEEQETKGSRVTAQK) are excised as a propeptide. A disulfide bridge connects residues Cys85 and Cys90. At Phe120 the chain carries Phenylalanine amide. Residues 127–130 (DLQA) constitute a propeptide that is removed on maturation.

It belongs to the calcitonin family. In terms of tissue distribution, detected in nerve cells of cerebrum, hippocampus and pons/midbrain in newborns, and only in nerve cells of pons/midbrain in adult.

It localises to the secreted. Functionally, CALCB/CGRP2 is a peptide hormone that induces vasodilation mediated by the CALCRL-RAMP1 receptor complex. Dilates a variety of vessels including the coronary, cerebral and systemic vasculature. Its abundance in the CNS also points toward a neurotransmitter or neuromodulator role. This is Calcitonin gene-related peptide 2 from Mus musculus (Mouse).